Consider the following 377-residue polypeptide: Chaperone protein DnaJ (377 aa).

The region spanning 5–69 is the J domain; the sequence is EYYDRLGLSK…QKRAAYDQYG (65 aa). Residues 133–215 form a CR-type zinc finger; the sequence is GAEKEIHYNR…CHGTGREKQS (83 aa). 8 residues coordinate Zn(2+): Cys-146, Cys-149, Cys-163, Cys-166, Cys-189, Cys-192, Cys-203, and Cys-206. 4 CXXCXGXG motif repeats span residues 146-153, 163-170, 189-196, and 203-210; these read CKTCSGSG, CGRCHGHG, CDVCHGTG, and CQTCHGTG.

The protein belongs to the DnaJ family. As to quaternary structure, homodimer. Zn(2+) serves as cofactor.

It is found in the cytoplasm. Its function is as follows. Participates actively in the response to hyperosmotic and heat shock by preventing the aggregation of stress-denatured proteins and by disaggregating proteins, also in an autonomous, DnaK-independent fashion. Unfolded proteins bind initially to DnaJ; upon interaction with the DnaJ-bound protein, DnaK hydrolyzes its bound ATP, resulting in the formation of a stable complex. GrpE releases ADP from DnaK; ATP binding to DnaK triggers the release of the substrate protein, thus completing the reaction cycle. Several rounds of ATP-dependent interactions between DnaJ, DnaK and GrpE are required for fully efficient folding. Also involved, together with DnaK and GrpE, in the DNA replication of plasmids through activation of initiation proteins. This Streptococcus thermophilus (strain CNRZ 1066) protein is Chaperone protein DnaJ.